The primary structure comprises 158 residues: Protein EOLA2 (158 aa).

The 87-residue stretch at 6–92 folds into the ASCH domain; the sequence is LSFRQPYAGF…IAGLVDIGET (87 aa).

It belongs to the EOLA family.

The protein is Protein EOLA2 of Homo sapiens (Human).